Consider the following 148-residue polypeptide: MEQTFIMIKPDGVQRGLVGEIIGRFEKKGFTLKGLKLLTVDQAFAEKHYADLSAKPFFNGLVEYIISGPVVAMVWEGKNVVTTGRKIIGATNPAESPPGTIRGDFAIDIGRNVIHGSDAVESAKKEIGLWFPEGVANWSSSLHPWIYE.

Residues K9, F57, R85, T91, R102, and N112 each coordinate ATP. H115 serves as the catalytic Pros-phosphohistidine intermediate.

The protein belongs to the NDK family. Mg(2+) is required as a cofactor.

The catalysed reaction is a 2'-deoxyribonucleoside 5'-diphosphate + ATP = a 2'-deoxyribonucleoside 5'-triphosphate + ADP. It catalyses the reaction a ribonucleoside 5'-diphosphate + ATP = a ribonucleoside 5'-triphosphate + ADP. In terms of biological role, major role in the synthesis of nucleoside triphosphates other than ATP. The ATP gamma phosphate is transferred to the NDP beta phosphate via a ping-pong mechanism, using a phosphorylated active-site intermediate. The polypeptide is Nucleoside diphosphate kinase (Helianthus annuus (Common sunflower)).